We begin with the raw amino-acid sequence, 404 residues long: Sulfate adenylyltransferase (404 aa).

Belongs to the sulfate adenylyltransferase family.

The enzyme catalyses sulfate + ATP + H(+) = adenosine 5'-phosphosulfate + diphosphate. It participates in sulfur metabolism; hydrogen sulfide biosynthesis; sulfite from sulfate: step 1/3. The protein is Sulfate adenylyltransferase of Chlorobaculum tepidum (strain ATCC 49652 / DSM 12025 / NBRC 103806 / TLS) (Chlorobium tepidum).